A 437-amino-acid chain; its full sequence is UDP-N-acetylmuramate--L-alanine ligase (437 aa).

108–114 (GAHGKTS) contributes to the ATP binding site.

The protein belongs to the MurCDEF family.

Its subcellular location is the cytoplasm. It catalyses the reaction UDP-N-acetyl-alpha-D-muramate + L-alanine + ATP = UDP-N-acetyl-alpha-D-muramoyl-L-alanine + ADP + phosphate + H(+). It participates in cell wall biogenesis; peptidoglycan biosynthesis. Functionally, cell wall formation. The sequence is that of UDP-N-acetylmuramate--L-alanine ligase from Staphylococcus aureus (strain JH9).